The following is a 260-amino-acid chain: Ubiquinone/menaquinone biosynthesis C-methyltransferase UbiE (260 aa).

Residues T83, D104, and N132–A133 contribute to the S-adenosyl-L-methionine site.

It belongs to the class I-like SAM-binding methyltransferase superfamily. MenG/UbiE family.

The enzyme catalyses a 2-demethylmenaquinol + S-adenosyl-L-methionine = a menaquinol + S-adenosyl-L-homocysteine + H(+). It catalyses the reaction a 2-methoxy-6-(all-trans-polyprenyl)benzene-1,4-diol + S-adenosyl-L-methionine = a 5-methoxy-2-methyl-3-(all-trans-polyprenyl)benzene-1,4-diol + S-adenosyl-L-homocysteine + H(+). It participates in quinol/quinone metabolism; menaquinone biosynthesis; menaquinol from 1,4-dihydroxy-2-naphthoate: step 2/2. It functions in the pathway cofactor biosynthesis; ubiquinone biosynthesis. In terms of biological role, methyltransferase required for the conversion of demethylmenaquinol (DMKH2) to menaquinol (MKH2) and the conversion of 2-polyprenyl-6-methoxy-1,4-benzoquinol (DDMQH2) to 2-polyprenyl-3-methyl-6-methoxy-1,4-benzoquinol (DMQH2). This chain is Ubiquinone/menaquinone biosynthesis C-methyltransferase UbiE, found in Bartonella tribocorum (strain CIP 105476 / IBS 506).